We begin with the raw amino-acid sequence, 81 residues long: Acyl carrier protein (81 aa).

One can recognise a Carrier domain in the interval 1–79; it reads MDVAAMQVKI…DIFDYLAKNK (79 aa). The residue at position 39 (serine 39) is an O-(pantetheine 4'-phosphoryl)serine.

The protein belongs to the acyl carrier protein (ACP) family. In terms of processing, 4'-phosphopantetheine is transferred from CoA to a specific serine of apo-ACP by AcpS. This modification is essential for activity because fatty acids are bound in thioester linkage to the sulfhydryl of the prosthetic group.

It localises to the cytoplasm. The protein operates within lipid metabolism; fatty acid biosynthesis. In terms of biological role, carrier of the growing fatty acid chain in fatty acid biosynthesis. This Syntrophobacter fumaroxidans (strain DSM 10017 / MPOB) protein is Acyl carrier protein.